Consider the following 137-residue polypeptide: MAEKEGKKEKKERWGIAHIYASFNNTIITITDLTGAETFARWSGGMVVDADREESSPYAAMKAARRAAEEAMEKGITAVHVKVRAPGGHGPKTPGPGAQAAIRALARAGLKIGRIEDVTPIPHDGTRRPGGKRGRRV.

Positions 116-137 (EDVTPIPHDGTRRPGGKRGRRV) are disordered.

This sequence belongs to the universal ribosomal protein uS11 family. Part of the 30S ribosomal subunit.

In terms of biological role, located on the platform of the 30S subunit. The chain is Small ribosomal subunit protein uS11 from Methanopyrus kandleri (strain AV19 / DSM 6324 / JCM 9639 / NBRC 100938).